We begin with the raw amino-acid sequence, 716 residues long: Polyribonucleotide nucleotidyltransferase (716 aa).

Mg(2+)-binding residues include aspartate 495 and aspartate 501. The KH domain occupies 562-621; sequence PRLFRIQINPEQIGLVIGPGGKTIRSITEQTGAKIDIEDTGAVTISAVDADSALRAKSII. The 69-residue stretch at 631–699 folds into the S1 motif domain; sequence GDVYIGKVTR…QKGRVNLTRK (69 aa).

Belongs to the polyribonucleotide nucleotidyltransferase family. Mg(2+) serves as cofactor.

Its subcellular location is the cytoplasm. It carries out the reaction RNA(n+1) + phosphate = RNA(n) + a ribonucleoside 5'-diphosphate. In terms of biological role, involved in mRNA degradation. Catalyzes the phosphorolysis of single-stranded polyribonucleotides processively in the 3'- to 5'-direction. The polypeptide is Polyribonucleotide nucleotidyltransferase (Synechococcus sp. (strain ATCC 27144 / PCC 6301 / SAUG 1402/1) (Anacystis nidulans)).